A 517-amino-acid chain; its full sequence is Crotonobetaine/carnitine--CoA ligase (517 aa).

It belongs to the ATP-dependent AMP-binding enzyme family.

The enzyme catalyses 4-(trimethylamino)butanoate + ATP + CoA = 4-(trimethylamino)butanoyl-CoA + AMP + diphosphate. It carries out the reaction crotonobetaine + ATP + CoA = crotonobetainyl-CoA + AMP + diphosphate. It catalyses the reaction (R)-carnitine + ATP + CoA = (R)-carnitinyl-CoA + AMP + diphosphate. It participates in amine and polyamine metabolism; carnitine metabolism. Its function is as follows. Catalyzes the transfer of CoA to carnitine, generating the initial carnitinyl-CoA needed for the CaiB reaction cycle. Also has activity toward crotonobetaine and gamma-butyrobetaine. In Salmonella agona (strain SL483), this protein is Crotonobetaine/carnitine--CoA ligase.